Consider the following 207-residue polypeptide: FMN-dependent NADH:quinone oxidoreductase 3 (207 aa).

Residues serine 10 and 16 to 18 (SIS) each bind FMN.

Belongs to the azoreductase type 1 family. As to quaternary structure, homodimer. FMN serves as cofactor.

The enzyme catalyses 2 a quinone + NADH + H(+) = 2 a 1,4-benzosemiquinone + NAD(+). It catalyses the reaction N,N-dimethyl-1,4-phenylenediamine + anthranilate + 2 NAD(+) = 2-(4-dimethylaminophenyl)diazenylbenzoate + 2 NADH + 2 H(+). In terms of biological role, quinone reductase that provides resistance to thiol-specific stress caused by electrophilic quinones. Functionally, also exhibits azoreductase activity. Catalyzes the reductive cleavage of the azo bond in aromatic azo compounds to the corresponding amines. This Burkholderia lata (strain ATCC 17760 / DSM 23089 / LMG 22485 / NCIMB 9086 / R18194 / 383) protein is FMN-dependent NADH:quinone oxidoreductase 3.